Consider the following 469-residue polypeptide: Arginine biosynthesis bifunctional protein ArgJ, mitochondrial (469 aa).

The substrate site is built by Thr-199, Lys-228, Thr-239, Glu-325, Asn-464, and Thr-469. Thr-239 serves as the catalytic Nucleophile.

The protein belongs to the ArgJ family. As to quaternary structure, heterodimer of an alpha and a beta chain. Post-translationally, the alpha and beta chains are autoproteolytically processed from a single precursor protein within the mitochondrion.

The protein resides in the mitochondrion matrix. It catalyses the reaction N(2)-acetyl-L-ornithine + L-glutamate = N-acetyl-L-glutamate + L-ornithine. The enzyme catalyses L-glutamate + acetyl-CoA = N-acetyl-L-glutamate + CoA + H(+). It functions in the pathway amino-acid biosynthesis; L-arginine biosynthesis; L-ornithine and N-acetyl-L-glutamate from L-glutamate and N(2)-acetyl-L-ornithine (cyclic): step 1/1. Its pathway is amino-acid biosynthesis; L-arginine biosynthesis; N(2)-acetyl-L-ornithine from L-glutamate: step 1/4. Functionally, catalyzes two activities which are involved in the cyclic version of arginine biosynthesis: the synthesis of acetylglutamate from glutamate and acetyl-CoA, and of ornithine by transacetylation between acetylornithine and glutamate. This is Arginine biosynthesis bifunctional protein ArgJ, mitochondrial from Sordaria macrospora (strain ATCC MYA-333 / DSM 997 / K(L3346) / K-hell).